We begin with the raw amino-acid sequence, 202 residues long: Secreted RxLR effector protein 11 (202 aa).

Residues 1–23 (MRLNFTKLFAGAVALAWTTESMA) form the signal peptide. A RxLR-dEER motif is present at residues 49–61 (RRLRTINGADEER).

This sequence belongs to the RxLR effector family.

The protein localises to the secreted. Its subcellular location is the host cytoplasm. It localises to the host nucleus. Its function is as follows. Effector that acts as a broad suppressor of cell death to interrupt plant immunity. Inhibits cell death induced by cell death-inducing proteins, including the PAMP elicitor INF1 from P.infestans. The protein is Secreted RxLR effector protein 11 of Plasmopara viticola (Downy mildew of grapevine).